The chain runs to 148 residues: Deoxyuridine 5'-triphosphate nucleotidohydrolase (148 aa).

Substrate-binding positions include 67–69 (RSG), Asn-80, 84–86 (LID), and Met-94.

The protein belongs to the dUTPase family. Requires Mg(2+) as cofactor.

The catalysed reaction is dUTP + H2O = dUMP + diphosphate + H(+). It functions in the pathway pyrimidine metabolism; dUMP biosynthesis; dUMP from dCTP (dUTP route): step 2/2. Functionally, this enzyme is involved in nucleotide metabolism: it produces dUMP, the immediate precursor of thymidine nucleotides and it decreases the intracellular concentration of dUTP so that uracil cannot be incorporated into DNA. This chain is Deoxyuridine 5'-triphosphate nucleotidohydrolase, found in Burkholderia lata (strain ATCC 17760 / DSM 23089 / LMG 22485 / NCIMB 9086 / R18194 / 383).